The sequence spans 347 residues: GTPase Obg (347 aa).

The 159-residue stretch at 1 to 159 folds into the Obg domain; sequence MKFVDEATIK…RVLRLELKLL (159 aa). Positions 127 to 146 are disordered; the sequence is NTRYKTSTNRAPRQSKPGTP. Residues 129 to 138 show a composition bias toward polar residues; it reads RYKTSTNRAP. The OBG-type G domain occupies 160–334; the sequence is ADVGLLGLPN…LMQAIMKYLE (175 aa). GTP-binding positions include 166–173, 191–195, 213–216, 284–287, and 315–317; these read GLPNAGKS, FTTLY, DIPG, NKID, and SAA. The Mg(2+) site is built by serine 173 and threonine 193.

This sequence belongs to the TRAFAC class OBG-HflX-like GTPase superfamily. OBG GTPase family. As to quaternary structure, monomer. The cofactor is Mg(2+).

The protein localises to the cytoplasm. Functionally, an essential GTPase which binds GTP, GDP and possibly (p)ppGpp with moderate affinity, with high nucleotide exchange rates and a fairly low GTP hydrolysis rate. Plays a role in control of the cell cycle, stress response, ribosome biogenesis and in those bacteria that undergo differentiation, in morphogenesis control. This Thioalkalivibrio sulfidiphilus (strain HL-EbGR7) protein is GTPase Obg.